The primary structure comprises 243 residues: MIIIPARLKSSRFENKMLEDIFGLPMVVRCAKNANLVDECVVACDDESIMKACQKFHIKAVLTSKHHNSGTERCLEAAQILGLKNDERVLNLQGDEPFLEKKVILALLEATQNAPFMATCAKVIDEEQAKSPNLVKVVLDSQNNALYFSRSLIPFLRDFDAKRQTPLLGHIGIYGFHNKEILEELCALKPCVLEDTEKLEQLRALYYQKKILVKIVQSESMGIDTKEDLQNALKIFSPNLLKR.

Belongs to the KdsB family.

Its subcellular location is the cytoplasm. The enzyme catalyses 3-deoxy-alpha-D-manno-oct-2-ulosonate + CTP = CMP-3-deoxy-beta-D-manno-octulosonate + diphosphate. Its pathway is nucleotide-sugar biosynthesis; CMP-3-deoxy-D-manno-octulosonate biosynthesis; CMP-3-deoxy-D-manno-octulosonate from 3-deoxy-D-manno-octulosonate and CTP: step 1/1. The protein operates within bacterial outer membrane biogenesis; lipopolysaccharide biosynthesis. In terms of biological role, activates KDO (a required 8-carbon sugar) for incorporation into bacterial lipopolysaccharide in Gram-negative bacteria. This Helicobacter pylori (strain J99 / ATCC 700824) (Campylobacter pylori J99) protein is 3-deoxy-manno-octulosonate cytidylyltransferase.